A 516-amino-acid chain; its full sequence is Cytochrome P450 monooxygenase ntnM (516 aa).

The chain crosses the membrane as a helical span at residues 22-42 (IINVILSIAAIALIRALAISI). C453 serves as a coordination point for heme.

Belongs to the cytochrome P450 family. Heme serves as cofactor.

The protein resides in the membrane. It participates in secondary metabolite biosynthesis; terpenoid biosynthesis. Its function is as follows. Cytochrome P450 monooxygenase; part of the gene cluster that mediates the biosynthesis of the meroterpenoids nectripenoids A and B, as well as cochliquninone D and isocochliquninone E. The pathway probably begins with the HR-PKS ntnH that catalyzes two chain-extension steps to form a reduced triketide, which then primes the SAT domain in the NR-PKS ntnG to initiate three more cycles of extension to give a linear hexaketide corresponding to the polyketide part of nectripenoids. The FAD-dependent monooxygenase ntnJ then performs an oxidative decarboxylation at C11 of the ntnH/ntnG product, via an electrophilic aromatic hydroxylation with concomitant ipso-decarboxylation. The membrane-bound polyprenyl transferase ntnF then introduces a farnesyl group before the FAD-dependent monooxygenase ntnK functions as the first epoxidase on terminal C12'-C13' olefin, followed by a second epoxidation on C7'-C8' catalyzed by ntnA. The terpene cyclase/mutase ntnI then initiates the sequential tricyclic ring formation through protonation of the terminal epoxide and catalyzes the regioselective and stereoselective 6/6/6-tricyclic ring formation. The cytochrome P450 monooxygenase ntnM may then hydroxylate C1'. The sequence is that of Cytochrome P450 monooxygenase ntnM from Nectria sp.